Consider the following 76-residue polypeptide: DNA-directed RNA polymerase subunit epsilon (76 aa).

This sequence belongs to the RNA polymerase subunit epsilon family. As to quaternary structure, RNAP is composed of a core of 2 alpha, a beta and a beta' subunit. The core is associated with a delta subunit, and at least one of epsilon or omega. When a sigma factor is associated with the core the holoenzyme is formed, which can initiate transcription.

It catalyses the reaction RNA(n) + a ribonucleoside 5'-triphosphate = RNA(n+1) + diphosphate. A non-essential component of RNA polymerase (RNAP). The protein is DNA-directed RNA polymerase subunit epsilon of Lactococcus lactis subsp. cremoris (strain MG1363).